The following is a 368-amino-acid chain: Isopentenyl-diphosphate delta-isomerase (368 aa).

Residue 7–8 (RK) participates in substrate binding. FMN contacts are provided by residues threonine 65, 66–68 (GMT), serine 96, and asparagine 125. 96–98 (SQR) provides a ligand contact to substrate. Glutamine 160 contributes to the substrate binding site. Residue glutamate 161 coordinates Mg(2+). FMN is bound by residues lysine 193, serine 218, threonine 223, 275–277 (GIR), and 296–297 (AL).

It belongs to the IPP isomerase type 2 family. In terms of assembly, homooctamer. Dimer of tetramers. FMN serves as cofactor. Requires NADPH as cofactor. Mg(2+) is required as a cofactor.

It is found in the cytoplasm. It catalyses the reaction isopentenyl diphosphate = dimethylallyl diphosphate. Its function is as follows. Involved in the biosynthesis of isoprenoids. Catalyzes the 1,3-allylic rearrangement of the homoallylic substrate isopentenyl (IPP) to its allylic isomer, dimethylallyl diphosphate (DMAPP). This chain is Isopentenyl-diphosphate delta-isomerase, found in Saccharolobus solfataricus (strain ATCC 35092 / DSM 1617 / JCM 11322 / P2) (Sulfolobus solfataricus).